Reading from the N-terminus, the 128-residue chain is C-C motif chemokine 28 (128 aa).

The signal sequence occupies residues 1-24 (MQQTGLTLALVALAVCVALPSSEA). Cystine bridges form between Cys32–Cys60 and Cys33–Cys75. The interval 89–128 (EQAAKKNTKGNICHKKQAGKRKSKGAHQEKPEIHSHKSPY) is disordered. Basic residues predominate over residues 94 to 113 (KNTKGNICHKKQAGKRKSKG). Residues 114 to 128 (AHQEKPEIHSHKSPY) show a composition bias toward basic and acidic residues.

Belongs to the intercrine beta (chemokine CC) family.

It is found in the secreted. Its function is as follows. Chemotactic activity for resting CD4, CD8 T-cells and eosinophils. Binds to CCR3 and CCR10 and induces calcium mobilization in a dose-dependent manner. This chain is C-C motif chemokine 28 (CCL28), found in Canis lupus familiaris (Dog).